The primary structure comprises 310 residues: Olfactory receptor 2A4 (310 aa).

At 1–24 (MGDNITSIREFLLLGFPVGPRIQM) the chain is on the extracellular side. A glycan (N-linked (GlcNAc...) asparagine) is linked at asparagine 4. Residues 25–48 (LLFGLFSLFYVFTLLGNGTILGLI) traverse the membrane as a helical segment. Topologically, residues 49 to 56 (SLDSRLHA) are cytoplasmic. A helical transmembrane segment spans residues 57–78 (PMYFFLSHLAVVDIAYACNTVP). Residues 79-99 (RMLVNLLHPAKPISFAGRMMQ) lie on the Extracellular side of the membrane. A helical membrane pass occupies residues 100–119 (TFLFSTFAVTECLLLVVMSY). The Cytoplasmic segment spans residues 120–138 (DLYVAICHPLRYLAIMTWR). A helical membrane pass occupies residues 139–157 (VCITLAVTSWTTGVLLSLI). The Extracellular segment spans residues 158-194 (HLVLLLPLPFCRPQKIYHFFCEILAVLKLACADTHIN). A helical membrane pass occupies residues 195-218 (ENMVLAGAISGLVGPLSTIVVSYM). Residues 219–235 (CILCAILQIQSREVQRK) are Cytoplasmic-facing. A helical transmembrane segment spans residues 236–258 (AFRTCFSHLCVIGLVYGTAIIMY). Residues 259 to 271 (VGPRYGNPKEQKK) are Extracellular-facing. A helical membrane pass occupies residues 272–291 (YLLLFHSLFNPMLNPLICSL). Residues 292 to 310 (RNSEVKNTLKRVLGVERAL) lie on the Cytoplasmic side of the membrane.

The protein belongs to the G-protein coupled receptor 1 family.

It is found in the cell membrane. Odorant receptor. The sequence is that of Olfactory receptor 2A4 (OR2A4) from Homo sapiens (Human).